The sequence spans 309 residues: MSSLRTDNDTWDIASSVGATAVMVAAARAAETERPEPLIDDPYAKILVAGAGNGAWQYIADDGFVAKVTESDPEIGPLFEHMKNYQAVRTHFFDAFFAAAVDAGIRQIVILASGLDSRAFRLPWPAGTTVFEIDQPLVLAYKSSTLASHGVQPTADRREVPIDLRQDWPTALTHAGFDADQPTAWLAEGLLMYLPADAQDRLFAQITELSAPGSRVAAESMGIHAQDRRERMRERFASITAQFDVEPMDITELTYEDPDRADVAQWLTAHGWRAEAVPSQDEMRRLHRLVEIADGDDQSFSTFTTAVKR.

S-adenosyl-L-methionine contacts are provided by residues Asp134 and 163-164 (DL).

The protein belongs to the UPF0677 family.

In terms of biological role, exhibits S-adenosyl-L-methionine-dependent methyltransferase activity. In Mycolicibacterium vanbaalenii (strain DSM 7251 / JCM 13017 / BCRC 16820 / KCTC 9966 / NRRL B-24157 / PYR-1) (Mycobacterium vanbaalenii), this protein is Putative S-adenosyl-L-methionine-dependent methyltransferase Mvan_0104.